The primary structure comprises 688 residues: ATP-dependent zinc metalloprotease FTSH 6, chloroplastic (688 aa).

Residues 1–75 constitute a chloroplast transit peptide; sequence MKMASSSSAL…GFTSALGTVL (75 aa). Over residues 25–36 the composition is skewed to polar residues; sequence QQFQKPASLSKS. The interval 25–44 is disordered; the sequence is QQFQKPASLSKSSHTHKPSL. The transit peptide at 76-83 directs the protein to the thylakoid; that stretch reads AHPAKAEP. Topologically, residues 84–168 are lumenal, thylakoid; it reads EAPIEATSNR…AHPMNVNWGA (85 aa). Residues 169 to 189 form a helical membrane-spanning segment; it reads FLLNFLGNLGFPLILLVSLLL. The Stromal portion of the chain corresponds to 190–688; that stretch reads TSSSRRNPAG…RIRINDLISV (499 aa). 264 to 271 is a binding site for ATP; it reads GPPGTGKT. His485 is a Zn(2+) binding site. Glu486 is an active-site residue. Positions 489 and 563 each coordinate Zn(2+).

This sequence in the N-terminal section; belongs to the AAA ATPase family. In the C-terminal section; belongs to the peptidase M41 family. Zn(2+) serves as cofactor.

It localises to the plastid. It is found in the chloroplast thylakoid membrane. In terms of biological role, probable ATP-dependent zinc metallopeptidase. Involved in the degradation of the light-harvesting complex of photosystem II (LHC II) during senescence or high light acclimation. In Arabidopsis thaliana (Mouse-ear cress), this protein is ATP-dependent zinc metalloprotease FTSH 6, chloroplastic (FTSH6).